We begin with the raw amino-acid sequence, 420 residues long: Carbohydrate sulfotransferase 1 (420 aa).

Residue methionine 1 is a topological domain, cytoplasmic. Residues 2 to 23 (QCSWKAVILLALVSIAIQYTAI) form a helical; Signal-anchor for type II membrane protein membrane-spanning segment. The Lumenal segment spans residues 24-420 (RTFTAKPFHI…IEDKTFIPFL (397 aa)). Asparagine 64 carries an N-linked (GlcNAc...) asparagine glycan. 77-83 (TRSGSSF) lines the 3'-phosphoadenylyl sulfate pocket. 2 N-linked (GlcNAc...) asparagine glycosylation sites follow: asparagine 153 and asparagine 197. 242 to 250 (RDPRGILSS) contributes to the 3'-phosphoadenylyl sulfate binding site. N-linked (GlcNAc...) asparagine glycans are attached at residues asparagine 342 and asparagine 405.

The protein belongs to the sulfotransferase 1 family. Gal/GlcNAc/GalNAc subfamily.

It is found in the golgi apparatus membrane. It carries out the reaction 3'-phosphoadenylyl sulfate + keratan = adenosine 3',5'-bisphosphate + keratan 6'-sulfate.. Sulfotransferase that utilizes 3'-phospho-5'-adenylyl sulfate (PAPS) as sulfonate donor to catalyze the transfer of sulfate to position 6 of galactose (Gal) residues of keratan. The protein is Carbohydrate sulfotransferase 1 (chst1) of Danio rerio (Zebrafish).